The chain runs to 548 residues: MAIQQQPMTEPVGIPVIILKEGTQRSYGREALRANIMAVRAIAQILKTTYGPKGMDKMLVDSLGDITITNNGATILDKMDVAHPAAKMLVQISKGQEDEAGDGTKTTVIFAGELLKEAEKLLDINIHPTIIVEGYKEALRKASEVIESIAEPVSYDDVEKLKLIAKTSLNSKAVAEARDYFAELAVEAVRTVAERRGDRWYVDLNNIQIVKKHGGSLRDTRLVRGIVLDKEVVHPDMPRRVENARIALLDTPLEIEKPEIDLEISITSPEQIKALYEKQERILQEKIEKIAATGANVVITQKGIDDVAQHFLAKKGILAVRRVKRSDIEKIARATGARIVTDIEDLRPEDLGYAELVEERKVGEDKMVFIEGAKNPKSVTILLRGGFERLVDEAERSLHDALSVVADAIMDGKIVAGGGAVEAEVAKVLYEYASKLPGKTQLAVEAFARAVEALPQALAHNAGHDPIEVLVKLRSAHEKPENKWYGVDLDTGEIVDMWSRGVLEPMRVKLNALKAATEVASLILRIDDVIAARKEEEEKEEKRGGEEE.

The protein belongs to the TCP-1 chaperonin family. Forms a Heterooligomeric complex of two stacked eight-membered rings.

Functionally, molecular chaperone; binds unfolded polypeptides in vitro, and has a weak ATPase activity. This Aeropyrum pernix (strain ATCC 700893 / DSM 11879 / JCM 9820 / NBRC 100138 / K1) protein is Thermosome subunit beta (thsB).